Reading from the N-terminus, the 914-residue chain is Ubiquitin carboxyl-terminal hydrolase 20 (914 aa).

Residues D6–D111 form a UBP-type zinc finger. 12 residues coordinate Zn(2+): C8, H10, C30, C33, C43, C48, C53, H60, H64, H70, C83, and C86. Phosphoserine occurs at positions 112, 132, and 134. The USP domain maps to T145–S685. The active-site Nucleophile is C154. Disordered stretches follow at residues L257–D347 and Q360–V415. T258 bears the Phosphothreonine mark. A compositionally biased stretch (basic and acidic residues) spans E259–S279. S305 is modified (phosphoserine). Residues E316–F332 show a composition bias toward basic and acidic residues. The residue at position 368 (S368) is a Phosphoserine. T377 carries the phosphothreonine modification. 2 positions are modified to phosphoserine: S408 and S413. The active-site Proton acceptor is H643. 2 DUSP domains span residues E687–C780 and A789–V892.

This sequence belongs to the peptidase C19 family. USP20/USP33 subfamily. As to quaternary structure, interacts with VHL, leading to its ubiquitination and subsequent degradation. Interacts with CCP110. Interacts with DIO2. Interacts with HIF1A. Interacts with ADRB2. Interacts with USP18. In terms of processing, ubiquitinated via a VHL-dependent pathway for proteasomal degradation.

Its subcellular location is the cytoplasm. The protein resides in the endoplasmic reticulum. It is found in the perinuclear region. It localises to the cytoskeleton. The protein localises to the microtubule organizing center. Its subcellular location is the centrosome. The catalysed reaction is Thiol-dependent hydrolysis of ester, thioester, amide, peptide and isopeptide bonds formed by the C-terminal Gly of ubiquitin (a 76-residue protein attached to proteins as an intracellular targeting signal).. In terms of biological role, deubiquitinating enzyme that plays a role in many cellular processes including autophagy, cellular antiviral response or membrane protein biogenesis. Attenuates TLR4-mediated NF-kappa-B signaling by cooperating with beta-arrestin-2/ARRB2 and inhibiting TRAF6 autoubiquitination. Promotes cellular antiviral responses by deconjugating 'Lys-33' and 'Lys-48'-linked ubiquitination of STING1 leading to its stabilization. Plays an essential role in autophagy induction by regulating the ULK1 stability through deubiquitination of ULK1. Acts as a positive regulator for NF-kappa-B activation by TNF-alpha through deubiquitinating 'Lys-48'-linked polyubiquitination of SQSTM1, leading to its increased stability. Acts as a regulator of G-protein coupled receptor (GPCR) signaling by mediating the deubiquitination beta-2 adrenergic receptor (ADRB2). Plays a central role in ADRB2 recycling and resensitization after prolonged agonist stimulation by constitutively binding ADRB2, mediating deubiquitination of ADRB2 and inhibiting lysosomal trafficking of ADRB2. Upon dissociation, it is probably transferred to the translocated beta-arrestins, possibly leading to beta-arrestins deubiquitination and disengagement from ADRB2. This suggests the existence of a dynamic exchange between the ADRB2 and beta-arrestins. Deubiquitinates DIO2, thereby regulating thyroid hormone regulation. Deubiquitinates HIF1A, leading to stabilize HIF1A and enhance HIF1A-mediated activity. Deubiquitinates MCL1, a pivotal member of the anti-apoptotic Bcl-2 protein family to regulate its stability. Within the endoplasmic reticulum, participates with USP33 in the rescue of post-translationally targeted membrane proteins that are inappropriately ubiquitinated by the cytosolic protein quality control in the cytosol. This chain is Ubiquitin carboxyl-terminal hydrolase 20 (USP20), found in Homo sapiens (Human).